Here is a 374-residue protein sequence, read N- to C-terminus: C-C chemokine receptor type 6 (374 aa).

Residues 1-47 are Extracellular-facing; the sequence is MSGESMNFSDVFDSSEDYFVSVNTSYYSVDSEMLLCSLQEVRQFSRL. N-linked (GlcNAc...) asparagine glycosylation is found at Asn7 and Asn23. Residues 48-74 traverse the membrane as a helical segment; it reads FVPIAYSLICVFGLLGNILVVITFAFY. The Cytoplasmic portion of the chain corresponds to 75–83; that stretch reads KKARSMTDV. Residues 84 to 104 traverse the membrane as a helical segment; sequence YLLNMAIADILFVLTLPFWAV. Over 105–119 the chain is Extracellular; the sequence is SHATGAWVFSNATCK. Cysteines 118 and 197 form a disulfide. Residues 120 to 141 form a helical membrane-spanning segment; sequence LLKGIYAINFNCGMLLLTCISM. Over 142–159 the chain is Cytoplasmic; sequence DRYIAIVQATKSFRLRSR. The chain crosses the membrane as a helical span at residues 160 to 180; sequence TLPRSKIICLVVWGLSVIISS. The Extracellular portion of the chain corresponds to 181–211; sequence STFVFNQKYNTQGSDVCEPKYQTVSEPIRWK. Residues 212–238 form a helical membrane-spanning segment; the sequence is LLMLGLELLFGFFIPLMFMIFCYTFIV. Over 239–254 the chain is Cytoplasmic; the sequence is KTLVQAQNSKRHKAIR. Residues 255 to 279 traverse the membrane as a helical segment; that stretch reads VIIAVVLVFLACQIPHNMVLLVTAA. Over 280 to 303 the chain is Extracellular; it reads NLGKMNRSCQSEKLIGYTKTVTEV. The chain crosses the membrane as a helical span at residues 304–321; that stretch reads LAFLHCCLNPVLYAFIGQ. Residues 322–374 lie on the Cytoplasmic side of the membrane; sequence KFRNYFLKILKDLWCVRRKYKSSGFSCAGRYSENISRQTSETADNDNASSFTM.

It belongs to the G-protein coupled receptor 1 family. As to expression, sperm. Mainly localized in the tail and in the postacrosomal region but is also found in the midpiece and basal region in a small percentage of sperm cells. Reduced levels found in the sperms of asthenozoospermia and leukocytospermia patients (at protein level). Spleen, lymph nodes, appendix, and fetal liver. Expressed in lymphocytes, T-cells and B-cells but not in natural killer cells, monocytes or granulocytes.

The protein localises to the cell membrane. Its subcellular location is the cell surface. Its function is as follows. Receptor for the C-C type chemokine CCL20. Binds to CCL20 and subsequently transduces a signal by increasing the intracellular calcium ion levels. Although CCL20 is its major ligand it can also act as a receptor for non-chemokine ligands such as beta-defensins. Binds to defensin DEFB1 leading to increase in intracellular calcium ions and cAMP levels. Its binding to DEFB1 is essential for the function of DEFB1 in regulating sperm motility and bactericidal activity. Binds to defensins DEFB4 and DEFB4A/B and mediates their chemotactic effects. The ligand-receptor pair CCL20-CCR6 is responsible for the chemotaxis of dendritic cells (DC), effector/ memory T-cells and B-cells and plays an important role at skin and mucosal surfaces under homeostatic and inflammatory conditions, as well as in pathology, including cancer and various autoimmune diseases. CCR6-mediated signals are essential for immune responses to microbes in the intestinal mucosa and in the modulation of inflammatory responses initiated by tissue insult and trauma. CCR6 is essential for the recruitment of both the pro-inflammatory IL17 producing helper T-cells (Th17) and the regulatory T-cells (Treg) to sites of inflammation. Required for the normal migration of Th17 cells in Peyers-patches and other related tissue sites of the intestine and plays a role in regulating effector T-cell balance and distribution in inflamed intestine. Plays an important role in the coordination of early thymocyte precursor migration events important for normal subsequent thymocyte precursor development, but is not required for the formation of normal thymic natural regulatory T-cells (nTregs). Required for optimal differentiation of DN2 and DN3 thymocyte precursors. Essential for B-cell localization in the subepithelial dome of Peyers-patches and for efficient B-cell isotype switching to IgA in the Peyers-patches. Essential for appropriate anatomical distribution of memory B-cells in the spleen and for the secondary recall response of memory B-cells. Positively regulates sperm motility and chemotaxis via its binding to CCL20. In Homo sapiens (Human), this protein is C-C chemokine receptor type 6 (CCR6).